The chain runs to 440 residues: Probable exopolygalacturonase C (440 aa).

Positions 1-19 are cleaved as a signal peptide; it reads MSVFKASFLFLLSSSLVHG. N-linked (GlcNAc...) asparagine glycans are attached at residues asparagine 82 and asparagine 99. 3 PbH1 repeats span residues 215–236, 238–259, and 265–288; these read GTNIQITDSIMYNGDDAIAVGA, SHDTLFTRNTIGYQTHGMSIGS, and TDFANISNIRFDDVTVVDGLYAAR. Aspartate 229 functions as the Proton donor in the catalytic mechanism. The active site involves histidine 253. Asparagine 269, asparagine 301, asparagine 311, and asparagine 334 each carry an N-linked (GlcNAc...) asparagine glycan. Residues cysteine 387 and cysteine 393 are joined by a disulfide bond. Residues asparagine 417 and asparagine 432 are each glycosylated (N-linked (GlcNAc...) asparagine).

The protein belongs to the glycosyl hydrolase 28 family.

Its subcellular location is the secreted. The catalysed reaction is [(1-&gt;4)-alpha-D-galacturonosyl](n) + H2O = alpha-D-galacturonate + [(1-&gt;4)-alpha-D-galacturonosyl](n-1). In terms of biological role, specific in hydrolyzing the terminal glycosidic bond of polygalacturonic acid and oligogalacturonates. The chain is Probable exopolygalacturonase C (pgxC) from Aspergillus niger (strain ATCC MYA-4892 / CBS 513.88 / FGSC A1513).